The primary structure comprises 274 residues: MAYKVNLHITQKCNYACKYCFAHFDHHNDLTLGQWKHIIDNLKTSGLVDAINFAGGEPVLHRDFAAIVNYAYDQGFKLSIITNGSLMLNPKLMPPELFAKFDTLGISVDSINPKTLIALGACNNSQEVLSYDKLSHLITLARSVNPTIRIKLNTVITNLNADEDLTIIGQELDIARWKMLRMKLFIHEGFNNAPLLVSQADFDGFVERHAEVSHDIVPENDLTRSYIMVDNQGRLLDDETEEYKVVGSLLAEDFGTVFDRYHFDEATYASRYAG.

The Radical SAM core domain maps to 1-215; that stretch reads MAYKVNLHIT…VERHAEVSHD (215 aa). [4Fe-4S] cluster-binding residues include cysteine 13, cysteine 17, and cysteine 20.

It belongs to the radical SAM superfamily. Prokaryotic viperin family. It depends on [4Fe-4S] cluster as a cofactor.

It catalyses the reaction CTP + AH2 + S-adenosyl-L-methionine = 3'-deoxy-3',4'-didehydro-CTP + 5'-deoxyadenosine + L-methionine + A + H2O + H(+). Its function is as follows. Expression of pVip6 in E.coli (strain MG1655) confers resistance to phages lambda, P1, SECphi6, SECphi8 and T7. Catalyzes the conversion of cytidine triphosphate (CTP) to 3'-deoxy-3',4'-didehydro-CTP (ddhCTP), probably via a SAM-dependent radical mechanism. The modified nucleotide represses transcription from T7 RNA polymerase-directed genes (possibly by acting as chain terminators), strongly suggesting these nucleotides block viral polymerase transcription. In Selenomonas ruminantium, this protein is S-adenosylmethionine-dependent nucleotide dehydratase.